Consider the following 456-residue polypeptide: Solute carrier family 49 member 4 homolog (456 aa).

Topologically, residues 1–29 are cytoplasmic; that stretch reads MGLEWSSPGERQPLLYPGGPRAPRVFGRR. The Di-leucine motif; mediates lysosomal localization motif lies at 14–15; that stretch reads LL. Residues 30 to 50 traverse the membrane as a helical segment; the sequence is WLVLLLFSLLAFLQGLVWNSW. The Lumenal segment spans residues 51–67; it reads GPIQNSARTAYNFSGLD. N62 is a glycosylation site (N-linked (GlcNAc...) asparagine). A helical transmembrane segment spans residues 68–88; the sequence is IALLVLWGPIGFLPCFLFMWL. At 89–95 the chain is on the cytoplasmic side; that stretch reads MDNRGLR. The helical transmembrane segment at 96–116 threads the bilayer; sequence VTVLLTALLMVLGAGLRCVPV. Over 117–131 the chain is Lumenal; it reads QDLAVRRKLIHGGQL. The helical transmembrane segment at 132–152 threads the bilayer; sequence LNGFAGPTVMNAAPFLSTTWF. Topologically, residues 153 to 162 are cytoplasmic; it reads SPDERATATA. A helical transmembrane segment spans residues 163-183; sequence IASMLSYLGGACAFLVGPLVV. Over 184–207 the chain is Lumenal; that stretch reads PAPNSTSGLLLYSGSVGAIRDRIE. A glycan (N-linked (GlcNAc...) asparagine) is linked at N187. A helical transmembrane segment spans residues 208-228; sequence AVMYAEFGIIFVVFAAILAYF. Over 229 to 259 the chain is Cytoplasmic; it reads PSRPPVPPSVAAASRRLSYRTSILRLLSNVR. The chain crosses the membrane as a helical span at residues 260-280; sequence FLLIVLAYAIPLGFYAGWSGV. At 281–292 the chain is on the lumenal side; sequence LDLILTPVHVTQ. The helical transmembrane segment at 293 to 313 threads the bilayer; sequence VDAGWVGFWSIVGGCVVGIAV. Residues 314-326 lie on the Cytoplasmic side of the membrane; the sequence is GRFADSIRGVLKP. Residues 327-347 traverse the membrane as a helical segment; it reads ILLLLFSGAALSSTWFTLTFL. Over 348–362 the chain is Lumenal; it reads SNVTHLPLTTATLYT. N-linked (GlcNAc...) asparagine glycosylation is present at N349. Residues 363-383 traverse the membrane as a helical segment; it reads SCILIGVFLSGTVPIFFEMFV. The Cytoplasmic portion of the chain corresponds to 384–392; it reads ETVYPIPEG. A helical transmembrane segment spans residues 393 to 413; the sequence is ITCGVVTFLSNLFMGVLLLFL. Over 414 to 420 the chain is Lumenal; the sequence is TLYQTNL. An N-linked (GlcNAc...) asparagine glycan is attached at N419. The helical transmembrane segment at 421–441 threads the bilayer; it reads SWLNWCLTGSCFLSLLFIACF. Topologically, residues 442–456 are cytoplasmic; sequence RESYDRLYLDVFVSV.

This sequence belongs to the major facilitator superfamily.

The protein localises to the lysosome membrane. The catalysed reaction is pyridoxine(out) + n H(+)(out) = pyridoxine(in) + n H(+)(in). Mediates H(+)-dependent pyridoxine transport. This chain is Solute carrier family 49 member 4 homolog (slc49a4), found in Xenopus tropicalis (Western clawed frog).